Consider the following 185-residue polypeptide: RRM domain-containing protein ECU09_1470 (185 aa).

2 consecutive RRM domains span residues 8–87 and 101–170; these read NQLA…YAKR and KKVY…PAYE.

The sequence is that of RRM domain-containing protein ECU09_1470 from Encephalitozoon cuniculi (strain GB-M1) (Microsporidian parasite).